Reading from the N-terminus, the 177-residue chain is SPbeta prophage-derived uncharacterized protein YopI (177 aa).

A helical transmembrane segment spans residues 11 to 31 (FEGIIGALLGVIVTLILTHIL).

It localises to the cell membrane. The polypeptide is SPbeta prophage-derived uncharacterized protein YopI (yopI) (Bacillus subtilis (strain 168)).